Here is a 74-residue protein sequence, read N- to C-terminus: Protein krueppel (74 aa).

4 consecutive C2H2-type zinc fingers follow at residues 1–4 (ERTH), 10–32 (FECPECHKRFTRDHHLKTHMRLH), 38–60 (YHCSHCDRQFVQVANLRRHLRVH), and 66–74 (YACELCDAR).

This sequence belongs to the krueppel C2H2-type zinc-finger protein family.

It localises to the nucleus. Krueppel is a gap class segmentation protein. The chain is Protein krueppel (Kr) from Psychoda cinerea (Psychod fly).